Reading from the N-terminus, the 66-residue chain is DNA gyrase inhibitor YacG (66 aa).

Cys-9, Cys-12, Cys-28, and Cys-32 together coordinate Zn(2+). The segment at 45–66 (HKIAGSEGSEDELYSGDLEPRH) is disordered.

This sequence belongs to the DNA gyrase inhibitor YacG family. Interacts with GyrB. Zn(2+) is required as a cofactor.

Its function is as follows. Inhibits all the catalytic activities of DNA gyrase by preventing its interaction with DNA. Acts by binding directly to the C-terminal domain of GyrB, which probably disrupts DNA binding by the gyrase. This Pseudomonas putida (strain ATCC 700007 / DSM 6899 / JCM 31910 / BCRC 17059 / LMG 24140 / F1) protein is DNA gyrase inhibitor YacG.